An 864-amino-acid polypeptide reads, in one-letter code: Structure-specific endonuclease subunit SLX4 (864 aa).

Residues 35 to 54 are compositionally biased toward low complexity; the sequence is SPLSLPSPTSLLDFLSTSTS. Disordered regions lie at residues 35–72, 89–113, 160–193, 288–318, 348–382, 413–432, and 625–771; these read SPLS…GKEV, VVSG…PGNA, KANQ…HIND, GLSD…NPPK, LSDE…EKKN, ANGH…HISN, and KTSN…ETLP. The segment covering 58–72 has biased composition (basic and acidic residues); the sequence is ARSDTDGDKTQGKEV. Composition is skewed to polar residues over residues 160–169 and 289–306; these read KANQTVSLQP and LSDS…SATS. Over residues 307-317 the composition is skewed to basic residues; that stretch reads KPRRVKAKNPP. A compositionally biased stretch (polar residues) spans 659–668; sequence SIPQTATTQV. Residues 683–695 are compositionally biased toward low complexity; it reads VPVPSRRSTSTSK. The span at 743–771 shows a compositional bias: polar residues; it reads PESFNLPTTPLTIRSGKIPSTGTASETLP.

This sequence belongs to the SLX4 family. Forms a heterodimer with SLX1. In terms of processing, phosphorylated in response to DNA damage.

The protein localises to the nucleus. Its function is as follows. Regulatory subunit of the SLX1-SLX4 structure-specific endonuclease that resolves DNA secondary structures generated during DNA repair and recombination. Has endonuclease activity towards branched DNA substrates, introducing single-strand cuts in duplex DNA close to junctions with ss-DNA. In Paracoccidioides brasiliensis (strain Pb03), this protein is Structure-specific endonuclease subunit SLX4.